We begin with the raw amino-acid sequence, 230 residues long: Leucyl/phenylalanyl-tRNA--protein transferase (230 aa).

Belongs to the L/F-transferase family.

It localises to the cytoplasm. The catalysed reaction is N-terminal L-lysyl-[protein] + L-leucyl-tRNA(Leu) = N-terminal L-leucyl-L-lysyl-[protein] + tRNA(Leu) + H(+). It catalyses the reaction N-terminal L-arginyl-[protein] + L-leucyl-tRNA(Leu) = N-terminal L-leucyl-L-arginyl-[protein] + tRNA(Leu) + H(+). The enzyme catalyses L-phenylalanyl-tRNA(Phe) + an N-terminal L-alpha-aminoacyl-[protein] = an N-terminal L-phenylalanyl-L-alpha-aminoacyl-[protein] + tRNA(Phe). Functions in the N-end rule pathway of protein degradation where it conjugates Leu, Phe and, less efficiently, Met from aminoacyl-tRNAs to the N-termini of proteins containing an N-terminal arginine or lysine. In Hamiltonella defensa subsp. Acyrthosiphon pisum (strain 5AT), this protein is Leucyl/phenylalanyl-tRNA--protein transferase.